We begin with the raw amino-acid sequence, 95 residues long: Non-specific lipid-transfer protein (95 aa).

Cystine bridges form between C4–C52, C14–C29, and C50–C90.

It belongs to the plant LTP family. In terms of tissue distribution, seeds.

Its function is as follows. Plant non-specific lipid-transfer proteins transfer phospholipids as well as galactolipids across membranes. May play a role in wax or cutin deposition in the cell walls of expanding epidermal cells and certain secretory tissues. The polypeptide is Non-specific lipid-transfer protein (Eleusine coracana (Indian finger millet)).